The primary structure comprises 279 residues: Acetyl-coenzyme A carboxylase carboxyl transferase subunit beta (279 aa).

The CoA carboxyltransferase N-terminal domain occupies 23–279 (LWWKCEECGA…IVRLAGMLKV (257 aa)). Residues Cys-27, Cys-30, Cys-46, and Cys-49 each contribute to the Zn(2+) site. Residues 27–49 (CEECGAMIHKKQLEDHVYTCSDC) form a C4-type zinc finger.

Belongs to the AccD/PCCB family. In terms of assembly, acetyl-CoA carboxylase is a heterohexamer composed of biotin carboxyl carrier protein (AccB), biotin carboxylase (AccC) and two subunits each of ACCase subunit alpha (AccA) and ACCase subunit beta (AccD). Zn(2+) is required as a cofactor.

The protein resides in the cytoplasm. The enzyme catalyses N(6)-carboxybiotinyl-L-lysyl-[protein] + acetyl-CoA = N(6)-biotinyl-L-lysyl-[protein] + malonyl-CoA. The protein operates within lipid metabolism; malonyl-CoA biosynthesis; malonyl-CoA from acetyl-CoA: step 1/1. Its function is as follows. Component of the acetyl coenzyme A carboxylase (ACC) complex. Biotin carboxylase (BC) catalyzes the carboxylation of biotin on its carrier protein (BCCP) and then the CO(2) group is transferred by the transcarboxylase to acetyl-CoA to form malonyl-CoA. The sequence is that of Acetyl-coenzyme A carboxylase carboxyl transferase subunit beta from Chlorobium limicola (strain DSM 245 / NBRC 103803 / 6330).